A 408-amino-acid chain; its full sequence is Probable medium-chain specific acyl-CoA dehydrogenase 2, mitochondrial (408 aa).

The N-terminal 5 residues, 1 to 5 (MLSRL), are a transit peptide targeting the mitochondrion. Residues 143 to 152 (YCVTEPGAGS) and 176 to 178 (WIT) each bind FAD. Ser152 lines the substrate pocket. 263–266 (DMTR) is a binding site for substrate. Residues 291–293 (RKA), 301–302 (HQ), and 355–359 (MLFRC) contribute to the FAD site. Residue Glu382 is the Proton acceptor of the active site. Position 383 (Gly383) interacts with substrate. Position 384 to 386 (384 to 386 (TSQ)) interacts with FAD. Arg394 serves as a coordination point for substrate.

Belongs to the acyl-CoA dehydrogenase family. As to quaternary structure, homotetramer. The cofactor is FAD.

Its subcellular location is the mitochondrion matrix. It carries out the reaction a medium-chain 2,3-saturated fatty acyl-CoA + oxidized [electron-transfer flavoprotein] + H(+) = a medium-chain (2E)-enoyl-CoA + reduced [electron-transfer flavoprotein]. It functions in the pathway lipid metabolism; mitochondrial fatty acid beta-oxidation. This enzyme is specific for acyl chain lengths of 4 to 16. In Caenorhabditis briggsae, this protein is Probable medium-chain specific acyl-CoA dehydrogenase 2, mitochondrial.